Here is a 185-residue protein sequence, read N- to C-terminus: Coiled-coil domain-containing protein 32 (185 aa).

Positions 78–98 (LASLEKKLRRIKGLNQEVTSK) form a coiled coil. The interval 159 to 185 (IPPESQVEKPVAEDEPAAGDKPAAAEQ) is disordered.

As to quaternary structure, interacts with AP2S1; the interaction is direct and mediates association with adaptor protein complex 2 (AP-2).

The protein resides in the membrane. Its subcellular location is the coated pit. Its function is as follows. Regulates clathrin-mediated endocytsois of cargos such as transferrin probably through the association and modulation of adaptor protein complex 2 (AP-2). Has a role in ciliogenesis. Required for proper cephalic and left/right axis development. In Homo sapiens (Human), this protein is Coiled-coil domain-containing protein 32.